The following is a 1424-amino-acid chain: ABC multidrug transporter H (1424 aa).

Residues 1-49 form a disordered region; the sequence is MEDQGHLPSEPRALFDRRDDTDSTNTALDETDLSRTPLQDTSHTPHAED. The span at 23-42 shows a compositional bias: polar residues; that stretch reads STNTALDETDLSRTPLQDTS. 2 N-linked (GlcNAc...) asparagine glycosylation sites follow: Asn-79 and Asn-275. Positions 96–351 constitute an ABC transporter 1 domain; it reads LSQFNIPQHI…MEEQGFVCRE (256 aa). Transmembrane regions (helical) follow at residues 488–508, 520–540, 544–564, 569–589, 605–625, 629–649, and 710–730; these read GLFIKSGALFFSLLYNSLLAM, VLIKHKYFAFFHPAAFCIAQI, IPVLLFQISMFAVVVYFMVGL, GAFFSYWIIIFVATMVMTALF, VSGFLISALIMYCGYLEPYHA, WFIWIYWINPLAYAFDALLSI, and NFGILWAWWALFVAVTIIATS. A disordered region spans residues 760–782; sequence EEAQLNEKAGHKGTGTDSEAQSN. 2 N-linked (GlcNAc...) asparagine glycosylation sites follow: Asn-790 and Asn-798. One can recognise an ABC transporter 2 domain in the interval 794 to 1037; sequence FTWKNLTYTV…VKDYFARYGA (244 aa). 830–837 lines the ATP pocket; it reads GSSGAGKT. A run of 4 helical transmembrane segments spans residues 1131 to 1151, 1161 to 1181, 1200 to 1220, and 1240 to 1260; these read IALHIGSALFNGFSFWMIGDS, TIFNFIFVAPGVINQLQPLFI, VAFVTALIVSEFPYLCVCAVL, and AIFFIMLCYEFLYTGIGQFIA. Residue Asn-1265 is glycosylated (N-linked (GlcNAc...) asparagine). 2 consecutive transmembrane segments (helical) span residues 1268–1288 and 1300–1320; these read FAALTNPLILGTLVSFCGVLV and WIYWLNPFNYLMGSMLVFSVF. Residue Asn-1338 is glycosylated (N-linked (GlcNAc...) asparagine). Residues 1395–1415 traverse the membrane as a helical segment; that stretch reads TAIVCIFVLSSYALVYALMKL.

It belongs to the ABC transporter superfamily. ABCG family. PDR (TC 3.A.1.205) subfamily.

It is found in the cell membrane. With respect to regulation, the efflux inhibitor FK506 impairs the transport activity. Functionally, ABC efflux transporter that is able to transport rhodamine 6G (R-6G), a known substrate for many ABC transporters, but seems not to transport azoles. This chain is ABC multidrug transporter H, found in Aspergillus fumigatus (strain ATCC MYA-4609 / CBS 101355 / FGSC A1100 / Af293) (Neosartorya fumigata).